Consider the following 369-residue polypeptide: Flagellar P-ring protein (369 aa).

The N-terminal stretch at 1–23 is a signal peptide; sequence MRIASFFTVLLTLLTLNIAPASA.

The protein belongs to the FlgI family. The basal body constitutes a major portion of the flagellar organelle and consists of four rings (L,P,S, and M) mounted on a central rod.

The protein resides in the periplasm. It is found in the bacterial flagellum basal body. In terms of biological role, assembles around the rod to form the L-ring and probably protects the motor/basal body from shearing forces during rotation. This is Flagellar P-ring protein from Pectobacterium carotovorum subsp. carotovorum (strain PC1).